Here is a 253-residue protein sequence, read N- to C-terminus: Hydroxyacylglutathione hydrolase (253 aa).

7 residues coordinate Zn(2+): H59, H61, D63, H64, H118, D143, and H181.

The protein belongs to the metallo-beta-lactamase superfamily. Glyoxalase II family. Monomer. Requires Zn(2+) as cofactor.

It catalyses the reaction an S-(2-hydroxyacyl)glutathione + H2O = a 2-hydroxy carboxylate + glutathione + H(+). It functions in the pathway secondary metabolite metabolism; methylglyoxal degradation; (R)-lactate from methylglyoxal: step 2/2. Thiolesterase that catalyzes the hydrolysis of S-D-lactoyl-glutathione to form glutathione and D-lactic acid. In Prochlorococcus marinus (strain MIT 9211), this protein is Hydroxyacylglutathione hydrolase.